Here is a 346-residue protein sequence, read N- to C-terminus: Probable electron transfer flavoprotein subunit alpha, mitochondrial (346 aa).

Position 285-313 (285-313) interacts with FAD; the sequence is LYVAIGISGAIQHLAGMKESKMIIAINKD.

This sequence belongs to the ETF alpha-subunit/FixB family. In terms of assembly, heterodimer of an alpha and a beta subunit. FAD serves as cofactor.

It localises to the mitochondrion matrix. The electron transfer flavoprotein serves as a specific electron acceptor for several dehydrogenases, including five acyl-CoA dehydrogenases, glutaryl-CoA and sarcosine dehydrogenase. It transfers the electrons to the main mitochondrial respiratory chain via ETF-ubiquinone oxidoreductase (ETF dehydrogenase). In Cryptococcus neoformans var. neoformans serotype D (strain B-3501A) (Filobasidiella neoformans), this protein is Probable electron transfer flavoprotein subunit alpha, mitochondrial (ETF1).